The chain runs to 209 residues: Molybdenum cofactor guanylyltransferase (209 aa).

GTP-binding positions include 13–15, K26, N54, D74, and D104; that span reads LAG. A Mg(2+)-binding site is contributed by D104.

Belongs to the MobA family. Monomer. The cofactor is Mg(2+).

The protein resides in the cytoplasm. It catalyses the reaction Mo-molybdopterin + GTP + H(+) = Mo-molybdopterin guanine dinucleotide + diphosphate. Transfers a GMP moiety from GTP to Mo-molybdopterin (Mo-MPT) cofactor (Moco or molybdenum cofactor) to form Mo-molybdopterin guanine dinucleotide (Mo-MGD) cofactor. The sequence is that of Molybdenum cofactor guanylyltransferase from Acinetobacter baumannii (strain ACICU).